The chain runs to 140 residues: Cysteine protease inhibitor 6 (140 aa).

Cysteines 103 and 109 form a disulfide.

The protein belongs to the protease inhibitor I3 (leguminous Kunitz-type inhibitor) family.

The protein localises to the vacuole. In terms of biological role, inhibitor of cysteine proteases. May protect the plant by inhibiting proteases of invading organisms. The chain is Cysteine protease inhibitor 6 from Solanum tuberosum (Potato).